A 443-amino-acid polypeptide reads, in one-letter code: Exodeoxyribonuclease 7 large subunit (443 aa).

The protein belongs to the XseA family. As to quaternary structure, heterooligomer composed of large and small subunits.

It localises to the cytoplasm. It carries out the reaction Exonucleolytic cleavage in either 5'- to 3'- or 3'- to 5'-direction to yield nucleoside 5'-phosphates.. In terms of biological role, bidirectionally degrades single-stranded DNA into large acid-insoluble oligonucleotides, which are then degraded further into small acid-soluble oligonucleotides. The sequence is that of Exodeoxyribonuclease 7 large subunit from Vibrio vulnificus (strain YJ016).